The chain runs to 98 residues: NADH-ubiquinone oxidoreductase chain 4L (98 aa).

Helical transmembrane passes span 1 to 21 (MHYIYINIIIAFSMSLLGALL), 29 to 49 (SLLCLEGMMLALFVLSTLIAL), and 61 to 81 (IILLVFAACEAAIGLSLLVMV).

This sequence belongs to the complex I subunit 4L family. In terms of assembly, core subunit of respiratory chain NADH dehydrogenase (Complex I) which is composed of 45 different subunits.

The protein localises to the mitochondrion inner membrane. It catalyses the reaction a ubiquinone + NADH + 5 H(+)(in) = a ubiquinol + NAD(+) + 4 H(+)(out). Its function is as follows. Core subunit of the mitochondrial membrane respiratory chain NADH dehydrogenase (Complex I) which catalyzes electron transfer from NADH through the respiratory chain, using ubiquinone as an electron acceptor. Part of the enzyme membrane arm which is embedded in the lipid bilayer and involved in proton translocation. The sequence is that of NADH-ubiquinone oxidoreductase chain 4L (MT-ND4L) from Procavia capensis (Rock hyrax).